Consider the following 87-residue polypeptide: Phosphoribosyl-ATP pyrophosphatase (87 aa).

Belongs to the PRA-PH family.

The protein resides in the cytoplasm. It carries out the reaction 1-(5-phospho-beta-D-ribosyl)-ATP + H2O = 1-(5-phospho-beta-D-ribosyl)-5'-AMP + diphosphate + H(+). Its pathway is amino-acid biosynthesis; L-histidine biosynthesis; L-histidine from 5-phospho-alpha-D-ribose 1-diphosphate: step 2/9. The sequence is that of Phosphoribosyl-ATP pyrophosphatase from Thermobifida fusca (strain YX).